The following is a 215-amino-acid chain: Putative BTB/POZ domain-containing protein At2g05330 (215 aa).

A BTB domain is found at 17–87 (SWQKIGKLTY…LYSDGSMLSS (71 aa)).

Its pathway is protein modification; protein ubiquitination. In terms of biological role, may act as a substrate-specific adapter of an E3 ubiquitin-protein ligase complex (CUL3-RBX1-BTB) which mediates the ubiquitination and subsequent proteasomal degradation of target proteins. This Arabidopsis thaliana (Mouse-ear cress) protein is Putative BTB/POZ domain-containing protein At2g05330.